A 76-amino-acid chain; its full sequence is Conotoxin Cal5a L3 (76 aa).

The first 22 residues, 1–22 (MRFYIGLMAALMLTSVLRTDSA), serve as a signal peptide directing secretion. Positions 23 to 42 (SVGQTGTKSELAVIERVIRQ) are excised as a propeptide. P50 carries the 4-hydroxyproline modification. A 4-hydroxyproline; partial mark is found at P58, P62, and P64.

Belongs to the conotoxin T superfamily. Contains 2 disulfide bonds that can be either 'C1-C3, C2-C4' or 'C1-C4, C2-C3', since these disulfide connectivities have been observed for conotoxins with cysteine framework V (for examples, see AC P0DQQ7 and AC P81755). Expressed by the venom duct.

Its subcellular location is the secreted. Probable neurotoxin with unknown target. Possibly targets ion channels. This is Conotoxin Cal5a L3 from Californiconus californicus (California cone).